The following is a 429-amino-acid chain: MLIAVAGMSHRSAPVEARERVAFAPCAARSFLRRLREEDGVPEAVLLSTCNRTELYVVAEAEPARDRLLGLLAEDRGVEPGSLYRDTYWHTDAEAVRHLYRVSASLDSMVVGEAQILGQVRDAYRMATEERCTGPVLNRLFHTALRVGKRVRAETGIGDSSLSVPHVAAKLAGEVFGSLEGRRALVLGAGEMSELLVRHLRDRGVAEIRIANRTRERAERLAALFGGRAADLGDLPRELARADIVVSSTGSGEWVIRGPEVAAALESREEPLFLIDIAVPRDVDPVVQSIEGAFLYDIDDLQAVVERNAEDRQEAAAAAEEMIGPAVVEFMSWLSTLHVAPLIKELRDGAERIRRHEVSRALRKMDLSPEQEEAVERMSRSIVNKLLHGPISEIKARAGAGDPLDSAEVRRRLLSLRGPGVELHPSREP.

Substrate is bound by residues 49 to 52, Ser-108, 113 to 115, and Gln-119; these read TCNR and EAQ. Cys-50 (nucleophile) is an active-site residue. 188–193 provides a ligand contact to NADP(+); sequence GAGEMS.

Belongs to the glutamyl-tRNA reductase family. As to quaternary structure, homodimer.

The enzyme catalyses (S)-4-amino-5-oxopentanoate + tRNA(Glu) + NADP(+) = L-glutamyl-tRNA(Glu) + NADPH + H(+). The protein operates within porphyrin-containing compound metabolism; protoporphyrin-IX biosynthesis; 5-aminolevulinate from L-glutamyl-tRNA(Glu): step 1/2. In terms of biological role, catalyzes the NADPH-dependent reduction of glutamyl-tRNA(Glu) to glutamate 1-semialdehyde (GSA). The protein is Glutamyl-tRNA reductase of Rubrobacter xylanophilus (strain DSM 9941 / JCM 11954 / NBRC 16129 / PRD-1).